A 48-amino-acid polypeptide reads, in one-letter code: Large ribosomal subunit protein uL14 (48 aa).

It belongs to the universal ribosomal protein uL14 family.

In Onchocerca volvulus, this protein is Large ribosomal subunit protein uL14 (RPL23).